Reading from the N-terminus, the 257-residue chain is NAD-capped RNA hydrolase NudC (257 aa).

Substrate contacts are provided by lysine 25 and arginine 69. Zn(2+)-binding residues include cysteine 98 and cysteine 101. Residue glutamate 111 participates in substrate binding. Positions 116 and 119 each coordinate Zn(2+). Residue tyrosine 124 participates in substrate binding. In terms of domain architecture, Nudix hydrolase spans proline 125–threonine 248. Residues alanine 158, glutamate 174, and glutamate 178 each coordinate a divalent metal cation. Residues glycine 159–glycine 180 carry the Nudix box motif. Glutamine 192 to serine 199 is a binding site for substrate. An a divalent metal cation-binding site is contributed by glutamate 219. Alanine 241 is a binding site for substrate.

Belongs to the Nudix hydrolase family. NudC subfamily. Homodimer. The cofactor is Mg(2+). It depends on Mn(2+) as a cofactor. Zn(2+) is required as a cofactor.

It carries out the reaction a 5'-end NAD(+)-phospho-ribonucleoside in mRNA + H2O = a 5'-end phospho-adenosine-phospho-ribonucleoside in mRNA + beta-nicotinamide D-ribonucleotide + 2 H(+). The enzyme catalyses NAD(+) + H2O = beta-nicotinamide D-ribonucleotide + AMP + 2 H(+). It catalyses the reaction NADH + H2O = reduced beta-nicotinamide D-ribonucleotide + AMP + 2 H(+). MRNA decapping enzyme that specifically removes the nicotinamide adenine dinucleotide (NAD) cap from a subset of mRNAs by hydrolyzing the diphosphate linkage to produce nicotinamide mononucleotide (NMN) and 5' monophosphate mRNA. The NAD-cap is present at the 5'-end of some mRNAs and stabilizes RNA against 5'-processing. Has preference for mRNAs with a 5'-end purine. Catalyzes the hydrolysis of a broad range of dinucleotide pyrophosphates. In Shigella flexneri serotype 5b (strain 8401), this protein is NAD-capped RNA hydrolase NudC.